The chain runs to 310 residues: Cytochrome P450 monooxygenase ppzG (310 aa).

C288 contributes to the heme binding site.

Belongs to the cytochrome P450 family. Requires heme as cofactor.

Its pathway is secondary metabolite biosynthesis. Cytochrome P450 monooxygenase; part of the gene cluster that mediates the biosynthesis of pyrrolopyrazines, secondary metabolites showing insecticidal activity. The role of ppzG within the pathway has still to be determined. The single multifunctional NRPS ppzA is sufficient to produce peramine via condensation of 1-pyrroline-5-carboxylate and arginine, N-methylation of the alpha-amino group of arginine and reduction of the thioester and the cyclization to form an iminium ion resulting in release from the peptide synthetase. Deprotonation of this intermediate and oxidation of the pyrroline ring would give rise to peramine. In Epichloe species that produce only peramine, the peramine synthetase gene is not localized in a gene cluster, in contrast to Metarhizium species that contain additional pyrrolopyrazine biosynthesis genes. The 2-oxoglutarate-Fe(II) type oxidoreductase ppzC hydroxylates peramine to yield the newly identified compound 8-hydroxyperamine whereas ppzD converts L-proline into trans-4-hydroxy-L-proline, a precursor of peramine biosynthesis. This chain is Cytochrome P450 monooxygenase ppzG (ppzG), found in Metarhizium majus (strain ARSEF 297).